A 191-amino-acid polypeptide reads, in one-letter code: Putative 3-methyladenine DNA glycosylase (191 aa).

The protein belongs to the DNA glycosylase MPG family.

In Cutibacterium acnes (strain DSM 16379 / KPA171202) (Propionibacterium acnes), this protein is Putative 3-methyladenine DNA glycosylase.